The sequence spans 853 residues: DNA topoisomerase 1 (853 aa).

A Toprim domain is found at 3 to 136 (KSLVIVESPV…KFRRVVFNEI (134 aa)). Residues E9 and D105 each coordinate Mg(2+). The region spanning 152–565 (NMNRVYSQQA…SFFDNFSQQL (414 aa)) is the Topo IA-type catalytic domain. The interaction with DNA stretch occupies residues 186-191 (SAGRVQ). The active-site O-(5'-phospho-DNA)-tyrosine intermediate is Y313. 3 consecutive C4-type zinc fingers follow at residues 589-621 (CSLCNKKMGIKTAVTGVFLSCLGYNSEPNEKRC), 649-676 (CKKCNLVMDVYLINENLKIFICINNPSC), and 699-724 (CEKCKNDMLFKTGRFGNFFMCINDTC).

Belongs to the type IA topoisomerase family. In terms of assembly, monomer. Requires Mg(2+) as cofactor.

The enzyme catalyses ATP-independent breakage of single-stranded DNA, followed by passage and rejoining.. Functionally, releases the supercoiling and torsional tension of DNA, which is introduced during the DNA replication and transcription, by transiently cleaving and rejoining one strand of the DNA duplex. Introduces a single-strand break via transesterification at a target site in duplex DNA. The scissile phosphodiester is attacked by the catalytic tyrosine of the enzyme, resulting in the formation of a DNA-(5'-phosphotyrosyl)-enzyme intermediate and the expulsion of a 3'-OH DNA strand. The free DNA strand then undergoes passage around the unbroken strand, thus removing DNA supercoils. Finally, in the religation step, the DNA 3'-OH attacks the covalent intermediate to expel the active-site tyrosine and restore the DNA phosphodiester backbone. The polypeptide is DNA topoisomerase 1 (Buchnera aphidicola subsp. Schizaphis graminum (strain Sg)).